Reading from the N-terminus, the 277-residue chain is Probable ketoamine kinase HMPREF0351_12196 (277 aa).

An ATP-binding site is contributed by 84 to 86; the sequence is EWI. Asp186 serves as the catalytic Proton acceptor.

This sequence belongs to the fructosamine kinase family.

The enzyme catalyses N(6)-(D-ribulosyl)-L-lysine + ATP = N(6)-(3-O-phospho-D-ribulosyl)-L-lysine + ADP + H(+). It catalyses the reaction N-(D-ribulosyl)-cadaverine + ATP = N-(3-O-phospho-D-ribulosyl)-cadaverine + ADP + H(+). It carries out the reaction N(6)-(D-erythrulosyl)-L-lysine + ATP = N(6)-(3-O-phospho-D-erythrulosyl)-L-lysine + ADP + H(+). The catalysed reaction is N-(D-erythrulosyl)-cadaverine + ATP = N-(3-O-phospho-D-erythrulosyl)-cadaverine + ADP + H(+). The enzyme catalyses N(6)-D-ribulosyl-L-lysyl-[protein] + ATP = N(6)-(3-O-phospho-D-ribulosyl)-L-lysyl-[protein] + ADP + H(+). It catalyses the reaction N(6)-(D-erythrulosyl)-L-lysyl-[protein] + ATP = N(6)-(3-O-phospho-D-erythrulosyl)-L-lysyl-[protein] + ADP + H(+). In terms of biological role, ketoamine kinase that phosphorylates ketoamines, such as erythruloselysine, erythrulosecadaverine, ribuloselysine and ribulosecadaverine, on the third carbon of the sugar moiety to generate ketoamine 3-phosphate. Has higher activity on free lysine (erythruloselysine and ribuloselysine), than on ribuloselysine and erythruloselysine residues on glycated proteins. The protein is Probable ketoamine kinase HMPREF0351_12196 of Enterococcus faecium (strain ATCC BAA-472 / TX0016 / DO).